Consider the following 375-residue polypeptide: uncharacterized protein (375 aa).

7 helical membrane passes run 21-41 (LLLL…IVLF), 66-86 (IIVF…FCVS), 160-180 (LVGV…PGIV), 203-223 (LVGL…HLLI), 234-254 (FYMV…FHLF), 289-309 (VISF…YFLI), and 338-358 (FFLM…MLFF).

The protein localises to the cell membrane. This is an uncharacterized protein from Mycoplasma genitalium (strain ATCC 33530 / DSM 19775 / NCTC 10195 / G37) (Mycoplasmoides genitalium).